The chain runs to 482 residues: Chitobiosyldiphosphodolichol beta-mannosyltransferase (482 aa).

At 1 to 2 the chain is on the lumenal side; it reads MA. A helical membrane pass occupies residues 3–23; the sequence is ASCVALLVLALLLLVLLLGLW. The Cytoplasmic segment spans residues 24–99; sequence KRGRQTGRAR…DLRGLGAGPR (76 aa). Positions 100–120 form an intramembrane region, helical; that stretch reads ILQYGVKVVFQAVYLLWKMMR. Topologically, residues 121 to 482 are cytoplasmic; the sequence is MDPAAYIFLQ…PCGHPSCRGF (362 aa). The residue at position 242 (serine 242) is a Phosphoserine.

This sequence belongs to the glycosyltransferase group 1 family. Glycosyltransferase 33 subfamily.

It is found in the endoplasmic reticulum membrane. It carries out the reaction an N,N'-diacetylchitobiosyl-diphospho-di-trans,poly-cis-dolichol + GDP-alpha-D-mannose = a beta-D-Man-(1-&gt;4)-beta-D-GlcNAc-(1-&gt;4)-alpha-D-GlcNAc-diphospho-di-trans,poly-cis-dolichol + GDP + H(+). It functions in the pathway protein modification; protein glycosylation. Its function is as follows. Mannosyltransferase that operates in the biosynthetic pathway of dolichol-linked oligosaccharides, the glycan precursors employed in protein asparagine (N)-glycosylation. The assembly of dolichol-linked oligosaccharides begins on the cytosolic side of the endoplasmic reticulum membrane and finishes in its lumen. The sequential addition of sugars to dolichol pyrophosphate produces dolichol-linked oligosaccharides containing fourteen sugars, including two GlcNAcs, nine mannoses and three glucoses. Once assembled, the oligosaccharide is transferred from the lipid to nascent proteins by oligosaccharyltransferases. Catalyzes, on the cytoplasmic face of the endoplasmic reticulum, the addition of the first mannose residues to the dolichol-linked oligosaccharide chain, to produce Man1GlcNAc(2)-PP-dolichol core oligosaccharide. Man1GlcNAc(2)-PP-dolichol is a substrate for ALG2, the following enzyme in the biosynthetic pathway. The polypeptide is Chitobiosyldiphosphodolichol beta-mannosyltransferase (Mus musculus (Mouse)).